A 373-amino-acid chain; its full sequence is MPGWSCLVTGAGGFLGQRIVQLLVQEKDLKEVRVLDKVFRPETREEFFNLGTSIKVTVLEGDILDTQCLRRACQGISVVIHTAALIDVTGVNPRQTILDVNLKGTQNLLEACVQASVPAFIYCSTVDVAGPNSYKKIILNGHEEEHHESTWSNPYPYSKKMAEKAVLAANGSILKNGGTLHTCALRPMYIYGERSPFLSVMILAALKSKGILNVTGKFSIANPVYVGNVAWAHILAARGLRDPKKSQNVQGQFYYISDDTPHQSYDDLNYTLSKEWGLHLDSSWSLPLPLLYWLAFLLEIVSFFLHPVYNYRPSFNRHLVTLSNSKFTFSYKKAQRDLGYKPLVSWEEAKQKTSEWIGTLVEQHRETLDTKSQ.

The Proton acceptor role is filled by tyrosine 155. Lysine 159 contributes to the NAD(+) binding site. The helical transmembrane segment at 288-308 (LPLLYWLAFLLEIVSFFLHPV) threads the bilayer. An N6-acetyllysine modification is found at lysine 350.

Belongs to the 3-beta-HSD family. In terms of tissue distribution, skin, placenta, also detectable in ovary and adrenal gland.

It localises to the endoplasmic reticulum membrane. The protein localises to the mitochondrion membrane. The enzyme catalyses a 3beta-hydroxy-Delta(5)-steroid + NAD(+) = a 3-oxo-Delta(5)-steroid + NADH + H(+). It carries out the reaction a 3-oxo-Delta(5)-steroid = a 3-oxo-Delta(4)-steroid. It functions in the pathway lipid metabolism; steroid biosynthesis. Functionally, 3-beta-HSD is a bifunctional enzyme, that catalyzes the oxidative conversion of Delta(5)-ene-3-beta-hydroxy steroid, and the oxidative conversion of ketosteroids. The 3-beta-HSD enzymatic system plays a crucial role in the biosynthesis of all classes of hormonal steroids. In Rattus norvegicus (Rat), this protein is 3 beta-hydroxysteroid dehydrogenase/Delta 5--&gt;4-isomerase type 4 (Hsd3b6).